The chain runs to 147 residues: Hemoglobin subunit epsilon (147 aa).

A Globin domain is found at 3-147; it reads HFTAEEKSTI…VATALAHKYH (145 aa). Residues Ser-14 and Ser-51 each carry the phosphoserine modification. Heme b contacts are provided by His-64 and His-93.

This sequence belongs to the globin family. As to quaternary structure, heterotetramer of two alpha chains and two epsilon chains in early embryonic hemoglobin Gower-2; two zeta chains and two epsilon chains in early embryonic hemoglobin Gower-1. As to expression, red blood cells.

Its function is as follows. The epsilon chain is a beta-type chain of early mammalian embryonic hemoglobin. The chain is Hemoglobin subunit epsilon (HBE1) from Propithecus verreauxi (White sifaka).